A 425-amino-acid polypeptide reads, in one-letter code: Glutamate-1-semialdehyde 2,1-aminomutase (425 aa).

Lysine 265 carries the N6-(pyridoxal phosphate)lysine modification.

It belongs to the class-III pyridoxal-phosphate-dependent aminotransferase family. HemL subfamily. Homodimer. Requires pyridoxal 5'-phosphate as cofactor.

It localises to the cytoplasm. It carries out the reaction (S)-4-amino-5-oxopentanoate = 5-aminolevulinate. It functions in the pathway porphyrin-containing compound metabolism; protoporphyrin-IX biosynthesis; 5-aminolevulinate from L-glutamyl-tRNA(Glu): step 2/2. The sequence is that of Glutamate-1-semialdehyde 2,1-aminomutase from Laribacter hongkongensis (strain HLHK9).